The primary structure comprises 295 residues: 4-diphosphocytidyl-2-C-methyl-D-erythritol kinase (295 aa).

The active site involves Lys10. ATP is bound at residue 97 to 107; that stretch reads PIGSGLGGASS. Asp139 is an active-site residue.

It belongs to the GHMP kinase family. IspE subfamily. In terms of assembly, homodimer.

It catalyses the reaction 4-CDP-2-C-methyl-D-erythritol + ATP = 4-CDP-2-C-methyl-D-erythritol 2-phosphate + ADP + H(+). It participates in isoprenoid biosynthesis; isopentenyl diphosphate biosynthesis via DXP pathway; isopentenyl diphosphate from 1-deoxy-D-xylulose 5-phosphate: step 3/6. In terms of biological role, catalyzes the phosphorylation of the position 2 hydroxy group of 4-diphosphocytidyl-2C-methyl-D-erythritol. This chain is 4-diphosphocytidyl-2-C-methyl-D-erythritol kinase, found in Blochmanniella pennsylvanica (strain BPEN).